Reading from the N-terminus, the 377-residue chain is Probable isocitrate dehydrogenase [NAD] subunit alpha, mitochondrial (377 aa).

Arg131, Arg141, Arg162, and Asp249 together coordinate substrate. The Mg(2+) site is built by Asp249, Asp273, and Asp277.

Belongs to the isocitrate and isopropylmalate dehydrogenases family. Heterooligomer of subunits alpha, beta, and gamma in the apparent ratio of 2:1:1. Mg(2+) serves as cofactor. Mn(2+) is required as a cofactor.

It localises to the mitochondrion. It carries out the reaction D-threo-isocitrate + NAD(+) = 2-oxoglutarate + CO2 + NADH. In terms of biological role, probable catalytic subunit of the enzyme which catalyzes the decarboxylation of isocitrate (ICT) into alpha-ketoglutarate. This is Probable isocitrate dehydrogenase [NAD] subunit alpha, mitochondrial from Drosophila melanogaster (Fruit fly).